A 520-amino-acid polypeptide reads, in one-letter code: Arabinose import ATP-binding protein AraG (520 aa).

The segment covering 1–10 (MTTQTMTAVS) has biased composition (polar residues). The segment at 1–27 (MTTQTMTAVSGNDGDTGGDAAESPPGG) is disordered. 2 ABC transporter domains span residues 30–265 (LALD…MVGR) and 265–516 (RSIE…LIKL). 62-69 (GENGAGKS) is a binding site for ATP.

This sequence belongs to the ABC transporter superfamily. Arabinose importer (TC 3.A.1.2.2) family. In terms of assembly, the complex is composed of two ATP-binding proteins (AraG), two transmembrane proteins (AraH) and a solute-binding protein (AraF).

The protein localises to the cell inner membrane. The enzyme catalyses L-arabinose(out) + ATP + H2O = L-arabinose(in) + ADP + phosphate + H(+). Functionally, part of the ABC transporter complex AraFGH involved in L-arabinose import. Responsible for energy coupling to the transport system. The sequence is that of Arabinose import ATP-binding protein AraG from Azospirillum brasilense.